A 670-amino-acid chain; its full sequence is DNA mismatch repair protein MutL (670 aa).

The interval 363–451 is disordered; that stretch reads SFDRGRPLSR…RAAGGPASTH (89 aa). Over residues 379–389 the composition is skewed to basic and acidic residues; sequence ERWRERHRPDA.

Belongs to the DNA mismatch repair MutL/HexB family.

Its function is as follows. This protein is involved in the repair of mismatches in DNA. It is required for dam-dependent methyl-directed DNA mismatch repair. May act as a 'molecular matchmaker', a protein that promotes the formation of a stable complex between two or more DNA-binding proteins in an ATP-dependent manner without itself being part of a final effector complex. In Syntrophobacter fumaroxidans (strain DSM 10017 / MPOB), this protein is DNA mismatch repair protein MutL.